We begin with the raw amino-acid sequence, 436 residues long: Septin-7 (436 aa).

The residue at position 2 (Ser2) is an N-acetylserine. Tyr29 is subject to Phosphotyrosine. The 270-residue stretch at 46 to 315 (RGFEFTLMVV…ENYRSRKLAA (270 aa)) folds into the Septin-type G domain. Residues 46–316 (RGFEFTLMVV…NYRSRKLAAV (271 aa)) form an interaction with SEPTIN12 region. The tract at residues 56-63 (GESGLGKS) is G1 motif. Position 56 to 63 (56 to 63 (GESGLGKS)) interacts with GTP. Ser76 carries the post-translational modification Phosphoserine. GTP contacts are provided by residues Thr89, Gly115, and 194-202 (KADTLTPEE). The tract at residues 112-115 (DTPG) is G3 motif. The segment at 193–196 (AKAD) is G4 motif. Thr227 carries the phosphothreonine modification. Positions 249 and 264 each coordinate GTP. A coiled-coil region spans residues 331–436 (TKSPLAQMEE…EKNKKKGKIF (106 aa)). At Ser333 the chain carries Phosphoserine. The residue at position 372 (Lys372) is an N6-acetyllysine. The span at 377–409 (ELQRRHEQMKKNLEAQHKELEEKRRQFEEEKAN) shows a compositional bias: basic and acidic residues. Residues 377 to 436 (ELQRRHEQMKKNLEAQHKELEEKRRQFEEEKANWEAQQRILEQQNSSRTLEKNKKKGKIF) are disordered. Ser423 carries the post-translational modification Phosphoserine. Thr425 carries the post-translational modification Phosphothreonine.

The protein belongs to the TRAFAC class TrmE-Era-EngA-EngB-Septin-like GTPase superfamily. Septin GTPase family. Septins polymerize into heterooligomeric protein complexes that form filaments, and associate with cellular membranes, actin filaments and microtubules. GTPase activity is required for filament formation. Filaments are assembled from asymmetrical heterotrimers, composed of SEPTIN2, SEPTIN6 and SEPTIN7 that associate head-to-head to form a hexameric unit. Within the trimer, directly interacts with SEPTIN6, while interaction with SEPTIN2 seems indirect. In the absence of SEPTIN6, forms homodimers. Interacts directly with CENPE and links CENPE to septin filaments composed of SEPTIN2, SEPTIN6 and SEPTIN7. Interacts with SEPTIN5. Component of a septin core octameric complex consisting of SEPTIN12, SEPTIN7, SEPTIN6 and SEPTIN2 or SEPTIN4 in the order 12-7-6-2-2-6-7-12 or 12-7-6-4-4-6-7-12 and located in the sperm annulus; the SEPTIN12:SEPTIN7 association is mediated by the respective GTP-binding domains. Interacts with SEPTIN2, SEPTIN7, SEPTIN8, SEPTIN9 and SEPTIN11.

It localises to the cytoplasm. The protein localises to the chromosome. Its subcellular location is the centromere. It is found in the kinetochore. The protein resides in the cytoskeleton. It localises to the spindle. The protein localises to the cleavage furrow. Its subcellular location is the midbody. It is found in the cilium axoneme. The protein resides in the cell projection. It localises to the cilium. The protein localises to the flagellum. In terms of biological role, filament-forming cytoskeletal GTPase. Required for normal organization of the actin cytoskeleton. Required for normal progress through mitosis. Involved in cytokinesis. Required for normal association of CENPE with the kinetochore. Plays a role in ciliogenesis and collective cell movements. Forms a filamentous structure with SEPTIN12, SEPTIN6, SEPTIN2 and probably SEPTIN4 at the sperm annulus which is required for the structural integrity and motility of the sperm tail during postmeiotic differentiation. This Rattus norvegicus (Rat) protein is Septin-7.